A 307-amino-acid chain; its full sequence is Porphobilinogen deaminase (307 aa).

Residue cysteine 241 is modified to S-(dipyrrolylmethanemethyl)cysteine.

Belongs to the HMBS family. Monomer. Dipyrromethane serves as cofactor.

The catalysed reaction is 4 porphobilinogen + H2O = hydroxymethylbilane + 4 NH4(+). It participates in porphyrin-containing compound metabolism; protoporphyrin-IX biosynthesis; coproporphyrinogen-III from 5-aminolevulinate: step 2/4. Functionally, tetrapolymerization of the monopyrrole PBG into the hydroxymethylbilane pre-uroporphyrinogen in several discrete steps. The protein is Porphobilinogen deaminase of Macrococcus caseolyticus (strain JCSC5402) (Macrococcoides caseolyticum).